A 128-amino-acid chain; its full sequence is S-adenosylmethionine decarboxylase proenzyme (128 aa).

The Schiff-base intermediate with substrate; via pyruvic acid role is filled by Ser-61. Ser-61 is subject to Pyruvic acid (Ser); by autocatalysis. Residue His-66 is the Proton acceptor; for processing activity of the active site. Residue Cys-81 is the Proton donor; for catalytic activity of the active site.

The protein belongs to the prokaryotic AdoMetDC family. Type 1 subfamily. In terms of assembly, heterotetramer of two alpha and two beta chains arranged as a dimer of alpha/beta heterodimers. Pyruvate serves as cofactor. In terms of processing, is synthesized initially as an inactive proenzyme. Formation of the active enzyme involves a self-maturation process in which the active site pyruvoyl group is generated from an internal serine residue via an autocatalytic post-translational modification. Two non-identical subunits are generated from the proenzyme in this reaction, and the pyruvate is formed at the N-terminus of the alpha chain, which is derived from the carboxyl end of the proenzyme. The post-translation cleavage follows an unusual pathway, termed non-hydrolytic serinolysis, in which the side chain hydroxyl group of the serine supplies its oxygen atom to form the C-terminus of the beta chain, while the remainder of the serine residue undergoes an oxidative deamination to produce ammonia and the pyruvoyl group blocking the N-terminus of the alpha chain.

The enzyme catalyses S-adenosyl-L-methionine + H(+) = S-adenosyl 3-(methylsulfanyl)propylamine + CO2. It functions in the pathway amine and polyamine biosynthesis; S-adenosylmethioninamine biosynthesis; S-adenosylmethioninamine from S-adenosyl-L-methionine: step 1/1. Functionally, catalyzes the decarboxylation of S-adenosylmethionine to S-adenosylmethioninamine (dcAdoMet), the propylamine donor required for the synthesis of the polyamines spermine and spermidine from the diamine putrescine. The polypeptide is S-adenosylmethionine decarboxylase proenzyme (Synechococcus sp. (strain WH7803)).